A 22-amino-acid polypeptide reads, in one-letter code: Defensin D1 (22 aa).

This sequence belongs to the DEFL family. Group II subfamily.

Antimicrobial peptide. Active against Gram-positive and Gram-negative bacterial pathogens. This is Defensin D1 from Spinacia oleracea (Spinach).